The following is a 264-amino-acid chain: tRNA1(Val) (adenine(37)-N6)-methyltransferase (264 aa).

It belongs to the methyltransferase superfamily. tRNA (adenine-N(6)-)-methyltransferase family.

It localises to the cytoplasm. The catalysed reaction is adenosine(37) in tRNA1(Val) + S-adenosyl-L-methionine = N(6)-methyladenosine(37) in tRNA1(Val) + S-adenosyl-L-homocysteine + H(+). Functionally, specifically methylates the adenine in position 37 of tRNA(1)(Val) (anticodon cmo5UAC). The polypeptide is tRNA1(Val) (adenine(37)-N6)-methyltransferase (Shewanella pealeana (strain ATCC 700345 / ANG-SQ1)).